Consider the following 277-residue polypeptide: Uridine-cytidine kinase 1 (277 aa).

Position 24-32 (24-32 (GGTASGKST)) interacts with ATP. 6 residues coordinate substrate: D81, Y109, H114, R163, R172, and Q180. An ATP-binding site is contributed by D209. The disordered stretch occupies residues 241–277 (NHGRSLKRGVAEHGENPSGSSSNLTKRPLLEPSTRPH).

Belongs to the uridine kinase family.

The catalysed reaction is uridine + ATP = UMP + ADP + H(+). It catalyses the reaction cytidine + ATP = CMP + ADP + H(+). Its pathway is pyrimidine metabolism; CTP biosynthesis via salvage pathway; CTP from cytidine: step 1/3. The protein operates within pyrimidine metabolism; UMP biosynthesis via salvage pathway; UMP from uridine: step 1/1. Functionally, phosphorylates uridine and cytidine to uridine monophosphate and cytidine monophosphate. Does not phosphorylate deoxyribonucleosides or purine ribonucleosides. Can use ATP or GTP as a phosphate donor. The polypeptide is Uridine-cytidine kinase 1 (uck1) (Danio rerio (Zebrafish)).